A 290-amino-acid polypeptide reads, in one-letter code: Transposon Ty3-I Gag polyprotein (290 aa).

At S2 the chain carries N-acetylserine. Residues 265 to 282 form a CCHC-type zinc finger; the sequence is RLCFYCKKEGHRLNECRA.

It localises to the cytoplasm. Capsid protein (CA) is the structural component of the virus-like particle (VLP), forming the shell that encapsulates the retrotransposons dimeric RNA genome. In terms of biological role, nucleocapsid protein p9 (NC) forms the nucleocore that coats the retro-elements dimeric RNA. Binds these RNAs through its zinc fingers. Promotes primer tRNA(i)-Met annealing to the multipartite primer-binding site (PBS), dimerization of Ty3 RNA and initiation of reverse transcription. The sequence is that of Transposon Ty3-I Gag polyprotein (TY3A-I) from Saccharomyces cerevisiae (strain ATCC 204508 / S288c) (Baker's yeast).